A 412-amino-acid polypeptide reads, in one-letter code: Transcription factor IIIA (412 aa).

Residues 1–20 (MSESDETKSISSLISSSSSS) form a disordered region. Residues 9-20 (SISSLISSSSSS) show a composition bias toward low complexity. 7 C2H2-type zinc fingers span residues 25–49 (YICT…LRTH), 55–79 (YKCT…IVSH), 85–107 (FHCS…EITH), 111–136 (FKCT…LSVH), 140–162 (LTCK…KLKH), 169–194 (YQCD…KQSH), and 197–219 (LKCP…MLSH). Residues 228-252 (WTCDYCDVGKFAKKNELVEHYNIFH) form a C2H2-type 8; degenerate zinc finger. The segment at 285-316 (LETEKLKVEEDEEDEEDSLDEKRSDVRSDSMS) is disordered. The segment covering 293–303 (EEDEEDEEDSL) has biased composition (acidic residues). The C2H2-type 9 zinc-finger motif lies at 345 to 369 (INCPKNNCDRMFSREYDLRRHLKWH).

Its subcellular location is the nucleus. Transcription factor required for transcription of 5S rRNA by RNA polymerase III. This Candida albicans (strain SC5314 / ATCC MYA-2876) (Yeast) protein is Transcription factor IIIA (PZF1).